We begin with the raw amino-acid sequence, 102 residues long: Biotrophy-associated secreted protein 4 (102 aa).

A signal peptide spans 1–21 (MQLSFSAIAILLAFAVNHATA). Asparagine 36 carries N-linked (GlcNAc...) asparagine glycosylation.

It localises to the secreted. Secreted effector involved in biotrophic colonization of plant cells. Participates in transition from the biotrophic to the necrotrophic phase of Magnaporthe oryzae. Elicits rice basic defense responses during the early stage of interaction and promotes cell death in the late stage of compatible interaction. The sequence is that of Biotrophy-associated secreted protein 4 from Pyricularia oryzae (strain 70-15 / ATCC MYA-4617 / FGSC 8958) (Rice blast fungus).